The sequence spans 474 residues: MLRIAILGRPNVGKSSLFNRMCKRSLAIVNSQEGTTRDRLYGEIRGWSVPVQVIDTGGVDKDSEDHFQKHIYKQALAGANEADILLLVVDIRCGITEQDAELAKMLLPLNKPLILVANKADTFKDEHRIHELYKLGISEILAVSASHDKHIDKLLQRIKTLGNVPEVVEEFSEEEVEEEAVPSMELLSKEPLSDYEEEEIPFSTTSAPDKPLKIALIGRPNVGKSSIINGLLNEERCIIDNVPGTTRDNVDILYSHNDRSYLFIDTAGLRKMKSVKNSIEWISSSRTEKAIARADVCLLVIDAQHHLSSYDKRILSLISKHKKPHIILVNKWDLIEGVRMEHYIRDLRATDVYIGQSRILCISAATKRNLRHIFSSIDELYETVSSKVPTPVVNKTLASTLQKHHPQVINGRRLRIYYAIHKTATPFQFLLFINAKSLLTKHYECYLRNTLKSSFNLYGIPFDLEFKEKTKRTN.

2 consecutive EngA-type G domains span residues 2 to 166 and 212 to 385; these read LRIA…NVPE and LKIA…ETVS. GTP is bound by residues 8 to 15, 55 to 59, 118 to 121, 218 to 225, 265 to 269, and 330 to 333; these read GRPNVGKS, DTGGV, NKAD, DTAGL, and NKWD. In terms of domain architecture, KH-like spans 386-470; that stretch reads SKVPTPVVNK…PFDLEFKEKT (85 aa).

The protein belongs to the TRAFAC class TrmE-Era-EngA-EngB-Septin-like GTPase superfamily. EngA (Der) GTPase family. In terms of assembly, associates with the 50S ribosomal subunit.

GTPase that plays an essential role in the late steps of ribosome biogenesis. This Chlamydia caviae (strain ATCC VR-813 / DSM 19441 / 03DC25 / GPIC) (Chlamydophila caviae) protein is GTPase Der.